The chain runs to 341 residues: Glyceraldehyde-3-phosphate dehydrogenase 2 (341 aa).

NAD(+)-binding positions include Arg13–Ile14, Asp35, and Arg85. Residues Ser157–Thr159, Thr188, Thr217–Gly218, and Arg240 contribute to the D-glyceraldehyde 3-phosphate site. Cys158 (nucleophile) is an active-site residue. Asn322 is an NAD(+) binding site.

Belongs to the glyceraldehyde-3-phosphate dehydrogenase family. As to quaternary structure, homotetramer.

The protein resides in the cytoplasm. It catalyses the reaction D-glyceraldehyde 3-phosphate + phosphate + NAD(+) = (2R)-3-phospho-glyceroyl phosphate + NADH + H(+). It participates in carbohydrate degradation; glycolysis; pyruvate from D-glyceraldehyde 3-phosphate: step 1/5. The polypeptide is Glyceraldehyde-3-phosphate dehydrogenase 2 (gpd-2) (Caenorhabditis elegans).